Reading from the N-terminus, the 396-residue chain is Elongation factor Tu (396 aa).

Residues 10–206 (KPHVNIGTIG…AVDSYIPEPV (197 aa)) enclose the tr-type G domain. The interval 19 to 26 (GHVDHGKT) is G1. Position 19 to 26 (19 to 26 (GHVDHGKT)) interacts with GTP. A Mg(2+)-binding site is contributed by Thr-26. The interval 60 to 64 (GITIA) is G2. A G3 region spans residues 81 to 84 (DCPG). GTP-binding positions include 81–85 (DCPGH) and 136–139 (NKAD). The G4 stretch occupies residues 136–139 (NKAD). Residues 174 to 176 (SAL) form a G5 region.

This sequence belongs to the TRAFAC class translation factor GTPase superfamily. Classic translation factor GTPase family. EF-Tu/EF-1A subfamily. Monomer.

It is found in the cytoplasm. The enzyme catalyses GTP + H2O = GDP + phosphate + H(+). GTP hydrolase that promotes the GTP-dependent binding of aminoacyl-tRNA to the A-site of ribosomes during protein biosynthesis. This chain is Elongation factor Tu, found in Geotalea uraniireducens (strain Rf4) (Geobacter uraniireducens).